The primary structure comprises 361 residues: tRNA 2-selenouridine synthase (361 aa).

The Rhodanese domain maps to 11 to 134; the sequence is LIADTPLIDV…LRQTAIQATW (124 aa). Residue C94 is the S-selanylcysteine intermediate of the active site.

The protein belongs to the SelU family. Monomer.

The enzyme catalyses 5-methylaminomethyl-2-thiouridine(34) in tRNA + selenophosphate + (2E)-geranyl diphosphate + H2O + H(+) = 5-methylaminomethyl-2-selenouridine(34) in tRNA + (2E)-thiogeraniol + phosphate + diphosphate. The catalysed reaction is 5-methylaminomethyl-2-thiouridine(34) in tRNA + (2E)-geranyl diphosphate = 5-methylaminomethyl-S-(2E)-geranyl-thiouridine(34) in tRNA + diphosphate. It catalyses the reaction 5-methylaminomethyl-S-(2E)-geranyl-thiouridine(34) in tRNA + selenophosphate + H(+) = 5-methylaminomethyl-2-(Se-phospho)selenouridine(34) in tRNA + (2E)-thiogeraniol. It carries out the reaction 5-methylaminomethyl-2-(Se-phospho)selenouridine(34) in tRNA + H2O = 5-methylaminomethyl-2-selenouridine(34) in tRNA + phosphate. Functionally, involved in the post-transcriptional modification of the uridine at the wobble position (U34) of tRNA(Lys), tRNA(Glu) and tRNA(Gln). Catalyzes the conversion of 2-thiouridine (S2U-RNA) to 2-selenouridine (Se2U-RNA). Acts in a two-step process involving geranylation of 2-thiouridine (S2U) to S-geranyl-2-thiouridine (geS2U) and subsequent selenation of the latter derivative to 2-selenouridine (Se2U) in the tRNA chain. The chain is tRNA 2-selenouridine synthase from Salmonella arizonae (strain ATCC BAA-731 / CDC346-86 / RSK2980).